A 637-amino-acid chain; its full sequence is Phosphomethylpyrimidine synthase (637 aa).

Substrate is bound by residues asparagine 242, methionine 271, tyrosine 300, histidine 336, 356–358 (SRG), 397–400 (DGLR), and glutamate 436. Position 440 (histidine 440) interacts with Zn(2+). Tyrosine 463 contributes to the substrate binding site. Histidine 504 contributes to the Zn(2+) binding site. 3 residues coordinate [4Fe-4S] cluster: cysteine 584, cysteine 587, and cysteine 592.

The protein belongs to the ThiC family. Homodimer. [4Fe-4S] cluster serves as cofactor.

It carries out the reaction 5-amino-1-(5-phospho-beta-D-ribosyl)imidazole + S-adenosyl-L-methionine = 4-amino-2-methyl-5-(phosphooxymethyl)pyrimidine + CO + 5'-deoxyadenosine + formate + L-methionine + 3 H(+). Its pathway is cofactor biosynthesis; thiamine diphosphate biosynthesis. Its function is as follows. Catalyzes the synthesis of the hydroxymethylpyrimidine phosphate (HMP-P) moiety of thiamine from aminoimidazole ribotide (AIR) in a radical S-adenosyl-L-methionine (SAM)-dependent reaction. This is Phosphomethylpyrimidine synthase from Bordetella avium (strain 197N).